The primary structure comprises 559 residues: MKHSHLLQRCSAQLCTRGSSLILSLLLSVCLSVEGQYNGEKGISIPDHGYCQPISIPLCTDIAYNQTIMPNLLGHTNQEDAGLEVHQFYPLVKVQCSPELKFFLCSIYAPVCTVLEQALPPCRSLCDRARQGCEALMNKFGFQWPESLRCEKFPINGAGELCVGQNTTESGTPTPAVPETWTSNSRTYYRDKFMCPRALKVPAYVNYHFLGEKDCGAPCEVGKVHGLMYFAPEELNFARIWIGIWSVLCCASTLFTVLTYLVDMKRFSYPERPIIFLSGCYTMVAIAYIAGFLLEDKVVCNERFAEDGYKTVAQGTKKEGCTFLFMMLYFFSMASSIWWVILSLTWFLAAGMKWGHEAIEANSQYFHLAAWAVPAIKTITILAVGQVDGDTLSGVCFVGINNVDALRGFVLAPLFVYLFIGTSFLLAGFVSLFRIRTIMKHDGTKTEKLEKLMVRIGIFSVLYTVPATIVIACYFYEQAFREQWEKSWISQSCKTYAIPCPSTGHPPMSPDFTVFMIKYLMTLIVGITSGFWIWSGKTLNSWRKFYTRLTNSKQGETTV.

The N-terminal stretch at 1 to 35 (MKHSHLLQRCSAQLCTRGSSLILSLLLSVCLSVEG) is a signal peptide. The Extracellular segment spans residues 36–239 (QYNGEKGISI…FAPEELNFAR (204 aa)). Residues 46–165 (PDHGYCQPIS…NGAGELCVGQ (120 aa)) form the FZ domain. 5 disulfides stabilise this stretch: Cys-51–Cys-112, Cys-59–Cys-105, Cys-96–Cys-133, Cys-122–Cys-162, and Cys-126–Cys-150. N-linked (GlcNAc...) asparagine glycosylation is present at Asn-65. N-linked (GlcNAc...) asparagine glycosylation occurs at Asn-166. A helical transmembrane segment spans residues 240–260 (IWIGIWSVLCCASTLFTVLTY). Residues 261-273 (LVDMKRFSYPERP) are Cytoplasmic-facing. The helical transmembrane segment at 274–294 (IIFLSGCYTMVAIAYIAGFLL) threads the bilayer. The Extracellular segment spans residues 295 to 321 (EDKVVCNERFAEDGYKTVAQGTKKEGC). The chain crosses the membrane as a helical span at residues 322–342 (TFLFMMLYFFSMASSIWWVIL). The Cytoplasmic segment spans residues 343-364 (SLTWFLAAGMKWGHEAIEANSQ). The chain crosses the membrane as a helical span at residues 365-385 (YFHLAAWAVPAIKTITILAVG). Residues 386–408 (QVDGDTLSGVCFVGINNVDALRG) lie on the Extracellular side of the membrane. The chain crosses the membrane as a helical span at residues 409–429 (FVLAPLFVYLFIGTSFLLAGF). The Cytoplasmic portion of the chain corresponds to 430–455 (VSLFRIRTIMKHDGTKTEKLEKLMVR). Residues 456–476 (IGIFSVLYTVPATIVIACYFY) traverse the membrane as a helical segment. At 477-513 (EQAFREQWEKSWISQSCKTYAIPCPSTGHPPMSPDFT) the chain is on the extracellular side. Residues 514 to 534 (VFMIKYLMTLIVGITSGFWIW) traverse the membrane as a helical segment. Residues 535-559 (SGKTLNSWRKFYTRLTNSKQGETTV) lie on the Cytoplasmic side of the membrane. The Lys-Thr-X-X-X-Trp motif, mediates interaction with the PDZ domain of Dvl family members motif lies at 537 to 542 (KTLNSW). The PDZ-binding motif lies at 557-559 (TTV).

It belongs to the G-protein coupled receptor Fz/Smo family. In terms of assembly, interacts with wnt8. As to expression, in the embryo, expressed in the heart, pronephros and otic vesicles.

The protein resides in the cell membrane. Functionally, receptor for Wnt proteins. Functions in the canonical Wnt/beta-catenin signaling pathway. The canonical Wnt/beta-catenin signaling pathway leads to the activation of disheveled proteins, inhibition of GSK-3 kinase, nuclear accumulation of beta-catenin and activation of Wnt target genes. A second signaling pathway involving PKC and calcium fluxes has been seen for some family members, but it is not yet clear if it represents a distinct pathway or if it can be integrated in the canonical pathway, as PKC seems to be required for Wnt-mediated inactivation of GSK-3 kinase. Both pathways seem to involve interactions with G-proteins. May be involved in transduction and intercellular transmission of polarity information during tissue morphogenesis and/or in differentiated tissues. The protein is Frizzled-1 (fzd1) of Xenopus laevis (African clawed frog).